Reading from the N-terminus, the 407-residue chain is tRNA (guanine-N(7)-)-methyltransferase non-catalytic subunit wuho (407 aa).

WD repeat units lie at residues 83-124 (AIEV…ARLL), 171-210 (GHLSVVFDILWTDDQQHIITCDRDDKIRVTNYPATFDIHS), and 214-252 (GHKEFVSGLALLTEQHIVSSSGDKTLRVWNFIEGKELLI).

Belongs to the WD repeat TRM82 family. Forms a heterodimer with the catalytic subunit Mettl1. Interacts with mei-P26 and weakly interacts with bgcn; required for the function or formation of the mei-P26-bgcn-bam-sxl complex. Interacts with nanos; may be involved in mei-P26-dependent derepression of the BMP signaling pathway. Interacts with Myc; the interaction may be mediated by mei-P26 and may be involved in the regulation of ribosome biogenesis. In testis, it is present at high level in hub cells, a niche for germline stem cells of testis. Ubiquitously expressed in all testicular cells throughout spermatogenesis. Ubiquitously expressed in all germline and somatic cells of the ovary.

It localises to the nucleus. The protein localises to the cytoplasm. The protein operates within tRNA modification; N(7)-methylguanine-tRNA biosynthesis. In terms of biological role, required for the Mettl1-dependent formation of N(7)-methylguanine at position 46 (m7G46) in tRNA. In the Mettl1-wuho methyltransferase complex, it is required to stabilize and induce conformational changes of the catalytic subunit. Required for binding of nanos mRNA and repression of translation by the mei-P26-bgcn-bam-sxl complex. May cooperate with mei-P26 and nanos to derepress the BMP signaling pathway. May cooperate with mei-P26 to suppress expression of a subset of microRNAs. May cooperate with mei-P26 to regulate bam expression levels in germline cells during gametogenesis. Required to promote mitosis to meiosis transition during gametogenesis. May regulate germline cell division in part by regulating ribosome biogenesis. The protein is tRNA (guanine-N(7)-)-methyltransferase non-catalytic subunit wuho of Drosophila ananassae (Fruit fly).